The primary structure comprises 188 residues: MAIMSDKWIKEAVINQSMISPFAEKQVRVHNKEKIISYGLSSYGYDARVSNEFKIFTNINSTTVDPKNFSEYNLVDREVDVCIIPPNSFALGRTIEYFKIPRDVLVICVGKSTYARCGIIVNVTPLEPEWEGHVTLEFSNTTPLPAKIYANEGACQFLFLKSDQICDTSYADRQGKYMKQVGVTLPLT.

DCTP contacts are provided by residues 111–116 (KSTYAR), 135–137 (TLE), Gln156, Tyr170, Lys179, and Gln180. Catalysis depends on Glu137, which acts as the Proton donor/acceptor.

Belongs to the dCTP deaminase family. Homotrimer.

It carries out the reaction dCTP + H2O + H(+) = dUTP + NH4(+). It functions in the pathway pyrimidine metabolism; dUMP biosynthesis; dUMP from dCTP (dUTP route): step 1/2. In terms of biological role, catalyzes the deamination of dCTP to dUTP. The polypeptide is dCTP deaminase (Rickettsia akari (strain Hartford)).